A 643-amino-acid polypeptide reads, in one-letter code: Transducer protein Htr8 (643 aa).

Helical transmembrane passes span 48-68, 79-99, 115-134, 149-169, and 184-204; these read VFVL…GTES, PGIL…LASI, VLAS…EAHF, WLPF…FGMI, and PWVW…ALMA. One can recognise an HAMP domain in the interval 273 to 326; sequence ERLEATANTYGAAMARAADGDLSVRLDPDVENDAMAAIAASFNEMLDETETTIR. A Methyl-accepting transducer domain is found at 345-581; it reads GVVEIEDASG…EAVSMIAEVS (237 aa).

Belongs to the methyl-accepting chemotaxis (MCP) protein family. Methylated by CheR.

The protein localises to the cell membrane. Its function is as follows. Potentially involved in chemo- or phototactic signal transduction. The chain is Transducer protein Htr8 (htr8) from Halobacterium salinarum (strain ATCC 29341 / DSM 671 / R1).